The sequence spans 201 residues: Pectinesterase inhibitor 7 (201 aa).

An N-terminal signal peptide occupies residues 1-24 (MARNFELSLILFVLYLSTAAIVMA). Disulfide bonds link C42–C51 and C108–C159.

The protein belongs to the PMEI family. Binds reversibly to PME3 to inhibit its activity; the stability of the PME3-PMEI7 complex and the inhibition of the pectin methylesterase (PME) activity is pH-dependent, based on protonation status of amino-acids at the complex interface. As to expression, accumulates in etiolated hypocotyls (at protein level).

It is found in the secreted. Its subcellular location is the extracellular space. It localises to the apoplast. The protein localises to the cell wall. Functionally, pectin methylesterase (PME) inhibitor that can target PME3 in a pH-dependent manner, mainly in slightly acidic conditions (pH 6.0 and 5.0) but not at pH 7.0; this processus relies on changes in the protonation of amino acids involved in intermolecular and intramolecular interactions. Regulates homogalacturonan methylesterification during plant development. The sequence is that of Pectinesterase inhibitor 7 from Arabidopsis thaliana (Mouse-ear cress).